Reading from the N-terminus, the 323-residue chain is tRNA U34 carboxymethyltransferase (323 aa).

Carboxy-S-adenosyl-L-methionine is bound by residues lysine 91, tryptophan 105, lysine 110, glycine 130, 180 to 181 (IE), methionine 196, tyrosine 200, and arginine 315.

This sequence belongs to the class I-like SAM-binding methyltransferase superfamily. CmoB family. Homotetramer.

It carries out the reaction carboxy-S-adenosyl-L-methionine + 5-hydroxyuridine(34) in tRNA = 5-carboxymethoxyuridine(34) in tRNA + S-adenosyl-L-homocysteine + H(+). Catalyzes carboxymethyl transfer from carboxy-S-adenosyl-L-methionine (Cx-SAM) to 5-hydroxyuridine (ho5U) to form 5-carboxymethoxyuridine (cmo5U) at position 34 in tRNAs. The chain is tRNA U34 carboxymethyltransferase from Citrifermentans bemidjiense (strain ATCC BAA-1014 / DSM 16622 / JCM 12645 / Bem) (Geobacter bemidjiensis).